We begin with the raw amino-acid sequence, 65 residues long: Large ribosomal subunit protein bL35 (65 aa).

Positions 1-25 (MPKLKTKSSAAKRFKKTGKGGFKHR) are disordered.

It belongs to the bacterial ribosomal protein bL35 family.

The chain is Large ribosomal subunit protein bL35 from Francisella tularensis subsp. holarctica (strain FTNF002-00 / FTA).